The sequence spans 66 residues: Large ribosomal subunit protein bL35 (66 aa).

Belongs to the bacterial ribosomal protein bL35 family.

This Acholeplasma laidlawii (strain PG-8A) protein is Large ribosomal subunit protein bL35.